A 134-amino-acid polypeptide reads, in one-letter code: uncharacterized protein (134 aa).

The helical transmembrane segment at 13 to 35 (FFIAFSAYLVVILLMTAVSVYYL) threads the bilayer.

Its subcellular location is the membrane. This is an uncharacterized protein from Archaeoglobus fulgidus (strain ATCC 49558 / DSM 4304 / JCM 9628 / NBRC 100126 / VC-16).